Consider the following 574-residue polypeptide: Membrane protein insertase YidC (574 aa).

6 helical membrane passes run 6 to 26 (VFLIFAWLMVAALLWMEWGKE), 350 to 370 (VIDYSRFSIMAIIGQGLFWVL), 376 to 396 (FLHNWGWAIVGLVVLLRLVLY), 447 to 467 (GGCLPLLIQMPIFFALYWVLV), 491 to 511 (FILPALNIAIMWATQKLTPTP), and 525 to 545 (PLVFGAMMAFVPSGLVLYWVV).

Belongs to the OXA1/ALB3/YidC family. Type 1 subfamily. Interacts with the Sec translocase complex via SecD. Specifically interacts with transmembrane segments of nascent integral membrane proteins during membrane integration.

It is found in the cell inner membrane. Functionally, required for the insertion and/or proper folding and/or complex formation of integral membrane proteins into the membrane. Involved in integration of membrane proteins that insert both dependently and independently of the Sec translocase complex, as well as at least some lipoproteins. Aids folding of multispanning membrane proteins. The protein is Membrane protein insertase YidC of Xanthomonas oryzae pv. oryzae (strain KACC10331 / KXO85).